Consider the following 277-residue polypeptide: Nickel import ATP-binding protein NikE (277 aa).

In terms of domain architecture, ABC transporter spans 14 to 253 (YRTVSLVGRS…EHPASRALQR (240 aa)). An ATP-binding site is contributed by 46 to 53 (GRSGSGKS).

Belongs to the ABC transporter superfamily. Nickel importer (TC 3.A.1.5.3) family. The complex is composed of two ATP-binding proteins (NikD and NikE), two transmembrane proteins (NikB and NikC) and a solute-binding protein (NikA).

It is found in the cell inner membrane. It carries out the reaction Ni(2+)(out) + ATP + H2O = Ni(2+)(in) + ADP + phosphate + H(+). In terms of biological role, part of the ABC transporter complex NikABCDE involved in nickel import. Responsible for energy coupling to the transport system. This Rhodospirillum rubrum (strain ATCC 11170 / ATH 1.1.1 / DSM 467 / LMG 4362 / NCIMB 8255 / S1) protein is Nickel import ATP-binding protein NikE.